The sequence spans 257 residues: MDVIPAIDLLDGRCVRLYQGDYQQSQVYNDNPVEVARQWADQGATYLHLVDLDGAKQGKPVNLASIEAIIRGISIPVQVGGGLRDRASIVQLFNLGVDRAIVGTVAVENPTLVKELCAEFPRKIAVGIDARNGKVATRGWLETSEVIATELAQEMAQLGAAAIIYTDIHRDGTLSGPNREALRELASNIEIPVIASGGISSLTDLLGLLSLEPLGVTGVIVGKALYTGDVDLSEALRAIGPGRWQDVPPDIDSSLFG.

Aspartate 8 functions as the Proton acceptor in the catalytic mechanism. Aspartate 129 acts as the Proton donor in catalysis.

This sequence belongs to the HisA/HisF family.

The protein resides in the cytoplasm. The enzyme catalyses 1-(5-phospho-beta-D-ribosyl)-5-[(5-phospho-beta-D-ribosylamino)methylideneamino]imidazole-4-carboxamide = 5-[(5-phospho-1-deoxy-D-ribulos-1-ylimino)methylamino]-1-(5-phospho-beta-D-ribosyl)imidazole-4-carboxamide. Its pathway is amino-acid biosynthesis; L-histidine biosynthesis; L-histidine from 5-phospho-alpha-D-ribose 1-diphosphate: step 4/9. The protein is 1-(5-phosphoribosyl)-5-[(5-phosphoribosylamino)methylideneamino] imidazole-4-carboxamide isomerase of Rippkaea orientalis (strain PCC 8801 / RF-1) (Cyanothece sp. (strain PCC 8801)).